Reading from the N-terminus, the 605-residue chain is Isocitrate dehydrogenase kinase/phosphatase (605 aa).

Residues 327–333 (APGIKGL) and K348 contribute to the ATP site. D383 is a catalytic residue.

The protein belongs to the AceK family.

It localises to the cytoplasm. The enzyme catalyses L-seryl-[isocitrate dehydrogenase] + ATP = O-phospho-L-seryl-[isocitrate dehydrogenase] + ADP + H(+). Its function is as follows. Bifunctional enzyme which can phosphorylate or dephosphorylate isocitrate dehydrogenase (IDH) on a specific serine residue. This is a regulatory mechanism which enables bacteria to bypass the Krebs cycle via the glyoxylate shunt in response to the source of carbon. When bacteria are grown on glucose, IDH is fully active and unphosphorylated, but when grown on acetate or ethanol, the activity of IDH declines drastically concomitant with its phosphorylation. The polypeptide is Isocitrate dehydrogenase kinase/phosphatase (Burkholderia lata (strain ATCC 17760 / DSM 23089 / LMG 22485 / NCIMB 9086 / R18194 / 383)).